The following is an 880-amino-acid chain: Probable receptor-like protein kinase At5g38990 (880 aa).

The signal sequence occupies residues 1–21 (MICHVLVIFTILVSAVVDATA). At 22-440 (SYEPTDVFLI…GKGKSSHVLP (419 aa)) the chain is on the extracellular side. N-linked (GlcNAc...) asparagine glycosylation is found at asparagine 46, asparagine 136, asparagine 158, asparagine 210, asparagine 256, asparagine 263, asparagine 297, and asparagine 324. Residues 441–461 (IIIAVVGSAVALAFFVLVVVL) traverse the membrane as a helical segment. Over 462–880 (VVMKRKKKSN…FSEINEPKAR (419 aa)) the chain is Cytoplasmic. Residues 471–505 (NESSVDTTNKPSTNSSWGPLLHGTGSTNTKSASSL) are disordered. Polar residues-rich tracts occupy residues 472–487 (ESSVDTTNKPSTNSSW) and 494–505 (TGSTNTKSASSL). One can recognise a Protein kinase domain in the interval 525–810 (FEEKLIIGVG…EFALQLHETA (286 aa)). ATP is bound by residues 531-539 (IGVGGFGSV) and lysine 554. The Proton acceptor role is filled by aspartate 653. Positions 820–846 (LDLMPSGEVGTTTDGEDDLFSRTTGHV) are disordered.

Belongs to the protein kinase superfamily. Ser/Thr protein kinase family.

Its subcellular location is the membrane. The chain is Probable receptor-like protein kinase At5g38990 from Arabidopsis thaliana (Mouse-ear cress).